Reading from the N-terminus, the 373-residue chain is Thyroid hormone receptor beta (373 aa).

The modulating stretch occupies residues 1–18 (MPSSMSGYIPSYLDKDEL). The Zn(2+) site is built by Cys19, Cys22, Cys36, Cys39, Cys57, Cys63, Cys73, and Cys76. 2 consecutive NR C4-type zinc fingers follow at residues 19-39 (CVVCGDKATGYHYRCITCEGC) and 57-81 (CKYEGKCVIDKVTRNQCQECRFKKC). The nuclear receptor DNA-binding region spans 19-93 (CVVCGDKATG…VGMATDLVLD (75 aa)). One can recognise an NR LBD domain in the interval 129–373 (EEWELIQVVT…PPLFLEVFED (245 aa)). Positions 194, 243, and 347 each coordinate 3,3',5-triiodo-L-thyronine. The L-thyroxine site is built by Arg194, Asn243, and His347.

It belongs to the nuclear hormone receptor family. NR1 subfamily.

It localises to the nucleus. Its function is as follows. Nuclear hormone receptor that can act as a repressor or activator of transcription. High affinity receptor for thyroid hormones, including triiodothyronine and thyroxine. The protein is Thyroid hormone receptor beta (thrb) of Aquarana catesbeiana (American bullfrog).